The following is a 193-amino-acid chain: Cysteine and glycine-rich protein 2 (193 aa).

One can recognise an LIM zinc-binding 1 domain in the interval C10–C61. The short motif at K64–K69 is the Nuclear localization signal element. K91 is covalently cross-linked (Glycyl lysine isopeptide (Lys-Gly) (interchain with G-Cter in SUMO2)). An N6-acetyllysine mark is found at K112 and K131. An LIM zinc-binding 2 domain is found at C119 to C170. K137 is modified (N6-acetyllysine; alternate). K137 carries the post-translational modification N6-succinyllysine; alternate. At K161 the chain carries N6-acetyllysine.

As to quaternary structure, interacts with KAT14. The LIM domain 1 is necessary and sufficient for this interaction. Interacts with GLRX3.

The protein localises to the nucleus. Drastically down-regulated in response to PDGF-BB or cell injury, that promote smooth muscle cell proliferation and dedifferentiation. Seems to play a role in the development of the embryonic vascular system. The protein is Cysteine and glycine-rich protein 2 (CSRP2) of Bos taurus (Bovine).